The following is a 406-amino-acid chain: Vacuole membrane protein 1 (406 aa).

Positions 1 to 21 are enriched in basic and acidic residues; it reads MAENGKNCDQRRVAMNKEHHN. A disordered region spans residues 1 to 35; the sequence is MAENGKNCDQRRVAMNKEHHNGNFTDPSSVNEKKR. A2 carries the post-translational modification N-acetylalanine. Topologically, residues 2–43 are cytoplasmic; sequence AENGKNCDQRRVAMNKEHHNGNFTDPSSVNEKKRREREERQN. A helical transmembrane segment spans residues 44–64; it reads IVLWRQPLITLQYFSLEILVI. Residues 65–77 are Extracellular-facing; sequence LKEWTSKLWHRQS. A helical transmembrane segment spans residues 78-98; the sequence is IVVSFLLLLAVLIATYYVEGV. Residues 99–109 are Cytoplasmic-facing; the sequence is HQQYVQRIEKQ. Residues 110–130 form a helical membrane-spanning segment; it reads FLLYAYWIGLGILSSVGLGTG. At 131–250 the chain is on the extracellular side; it reads LHTFLLYLGP…ASRAKLAVQK (120 aa). The tract at residues 173 to 316 is VTT domain; the sequence is GTEGTISLWS…FVIITFSKHI (144 aa). Residues 251 to 271 form a helical membrane-spanning segment; it reads LVQKVGFFGILACASIPNPLF. The Cytoplasmic portion of the chain corresponds to 272 to 273; the sequence is DL. A helical membrane pass occupies residues 274 to 294; it reads AGITCGHFLVPFWTFFGATLI. Over 295-305 the chain is Extracellular; the sequence is GKAIIKMHIQK. A helical transmembrane segment spans residues 306-326; it reads IFVIITFSKHIVEQMVAFIGA. The Cytoplasmic portion of the chain corresponds to 327–363; the sequence is VPGIGPSLQKPFQEYLEAQRQKLHHKSEMGTPQGENW. Residues 364–384 traverse the membrane as a helical segment; that stretch reads LSWMFEKLVVVMVCYFILSII. Topologically, residues 385-406 are extracellular; sequence NSMAQSYAKRIQQRLNSEEKTK.

Belongs to the VMP1 family. As to quaternary structure, interacts with BECN1. Interacts with TJP1. Interacts with TP53INP2. Interacts with TMEM41B. Interacts with ATP2A2, PLN and SLN; competes with PLN and SLN to prevent them from forming an inhibitory complex with ATP2A2. Interacts with ATG2A.

It is found in the endoplasmic reticulum-Golgi intermediate compartment membrane. The protein localises to the cell membrane. Its subcellular location is the vacuole membrane. It localises to the endoplasmic reticulum membrane. It catalyses the reaction a 1,2-diacyl-sn-glycero-3-phospho-L-serine(in) = a 1,2-diacyl-sn-glycero-3-phospho-L-serine(out). It carries out the reaction cholesterol(in) = cholesterol(out). The enzyme catalyses a 1,2-diacyl-sn-glycero-3-phosphocholine(in) = a 1,2-diacyl-sn-glycero-3-phosphocholine(out). The catalysed reaction is a 1,2-diacyl-sn-glycero-3-phosphoethanolamine(in) = a 1,2-diacyl-sn-glycero-3-phosphoethanolamine(out). Functionally, phospholipid scramblase involved in lipid homeostasis and membrane dynamics processes. Has phospholipid scramblase activity toward cholesterol and phosphatidylserine, as well as phosphatidylethanolamine and phosphatidylcholine. Required for autophagosome formation: participates in early stages of autophagosome biogenesis at the endoplasmic reticulum (ER) membrane by reequilibrating the leaflets of the ER as lipids are extracted by ATG2 (ATG2A or ATG2B) to mediate autophagosome assembly. Regulates ATP2A2 activity to control ER-isolation membrane contacts for autophagosome formation. In addition to autophagy, involved in other processes in which phospholipid scramblase activity is required. Modulates ER contacts with lipid droplets, mitochondria and endosomes. Plays an essential role in formation of cell junctions. Upon stress such as bacterial and viral infection, promotes formation of cytoplasmic vacuoles followed by cell death. Involved in the cytoplasmic vacuolization of acinar cells during the early stage of acute pancreatitis. In terms of biological role, (Microbial infection) Host factor required for infection by all flaviviruses tested such as Zika virus and Yellow fever virus. Probably required post-entry of the virus to facilitate the ER membrane remodeling necessary to form replication organelles. This chain is Vacuole membrane protein 1, found in Homo sapiens (Human).